A 329-amino-acid chain; its full sequence is 2-oxoglutarate-dependent dioxygenase htyE (329 aa).

Positions 175–289 constitute a Fe2OG dioxygenase domain; that stretch reads NTSELRLLHY…RYSVAYFGKP (115 aa). Residues H201, D203, and H261 each coordinate Fe cation. R280 lines the 2-oxoglutarate pocket.

Belongs to the iron/ascorbate-dependent oxidoreductase family. It depends on Fe(2+) as a cofactor.

Its pathway is antifungal biosynthesis. In terms of biological role, 2-oxoglutarate-dependent dioxygenase; part of the gene cluster that mediates the de novo generation of L-homotyrosine from acetyl-CoA and 4-hydroxyphenyl-pyruvate. L-homotyrosine is a building block of echinocandin B, a fungal lipidated cyclic hexapeptide that acts as an antifungal agent. L-homotyrosine 4-hydroxyphenyl-pyruvate first undergoes an aldol-type condensation by htyA with the C-2 of acetyl-CoA followed by the release of CoA to form 2-(4-hydroxybenzyl)-malate. This is followed by isomerization of 2-(4-hydroxy-benzyl)-malate to 3-(4-hydroxybenzyl)-malate by htyD. Thereafter, 3-(4-hydroxybenzyl)-malate undergoes decarboxylation and oxidation to form 2-oxo-4-(4-hydroxybenzyl)butanoic acid, coupled to reduction of NAD(+) to NADH by htyC. The product then undergoes transamination catalyzed by htyB to form L-homotyrosine. This is 2-oxoglutarate-dependent dioxygenase htyE from Aspergillus rugulosus (Emericella rugulosa).